Consider the following 233-residue polypeptide: H-2 class II histocompatibility antigen, A-S alpha chain (233 aa).

The interval glutamate 1–asparagine 88 is alpha-1. The Extracellular portion of the chain corresponds to glutamate 1 to glutamate 195. The alpha-2 stretch occupies residues glutamate 89–tryptophan 182. Residues proline 91–glutamate 183 form the Ig-like C1-type domain. Cysteines 111 and 167 form a disulfide. Residue asparagine 122 is glycosylated (N-linked (GlcNAc...) asparagine). A connecting peptide region spans residues glutamate 183 to glutamate 195. The helical transmembrane segment at threonine 196–leucine 221 threads the bilayer. Over arginine 222 to leucine 233 the chain is Cytoplasmic.

Belongs to the MHC class II family.

The protein localises to the membrane. The polypeptide is H-2 class II histocompatibility antigen, A-S alpha chain (H2-Aa) (Mus musculus (Mouse)).